The sequence spans 572 residues: Phosphoglucomutase-1 (572 aa).

Substrate-binding positions include Thr-23, Arg-27, Ser-120–His-121, and Lys-133. Ser-120 serves as the catalytic Phosphoserine intermediate. Residue Ser-120 coordinates Mg(2+). Positions 288, 290, and 292 each coordinate Mg(2+). Residues Asp-292–Arg-293, Thr-356, Glu-375–Ser-377, Lys-388, and Arg-524 contribute to the substrate site.

It belongs to the phosphohexose mutase family. The cofactor is Mg(2+).

It localises to the cytoplasm. The catalysed reaction is alpha-D-glucose 1-phosphate = alpha-D-glucose 6-phosphate. In terms of biological role, this enzyme participates in both the breakdown and synthesis of glucose. The chain is Phosphoglucomutase-1 (pgmA) from Dictyostelium discoideum (Social amoeba).